Reading from the N-terminus, the 807-residue chain is Phenylalanine--tRNA ligase beta subunit (807 aa).

The tRNA-binding domain occupies Ser-39–Ala-153. A B5 domain is found at Arg-407–Ser-491. 4 residues coordinate Mg(2+): Asp-469, Asp-475, Glu-478, and Glu-479. The FDX-ACB domain occupies Pro-713–Arg-806.

The protein belongs to the phenylalanyl-tRNA synthetase beta subunit family. Type 1 subfamily. In terms of assembly, tetramer of two alpha and two beta subunits. Requires Mg(2+) as cofactor.

The protein localises to the cytoplasm. The catalysed reaction is tRNA(Phe) + L-phenylalanine + ATP = L-phenylalanyl-tRNA(Phe) + AMP + diphosphate + H(+). This chain is Phenylalanine--tRNA ligase beta subunit, found in Synechococcus sp. (strain CC9902).